The sequence spans 334 residues: Protein CUP-SHAPED COTYLEDON 3 (334 aa).

The NAC domain maps to Leu-22–Lys-171. Residues Val-121–Asn-177 mediate DNA binding.

As to expression, in a general manner, present at the boundaries between mersitems and araising primordia.

It localises to the nucleus. Transcription activator. Involved in molecular mechanisms regulating shoot apical meristem (SAM) formation during embryogenesis and organ separation. Required for axillary meristem initiation and separation of the meristem from the main stem. May act as an inhibitor of cell division. This Arabidopsis thaliana (Mouse-ear cress) protein is Protein CUP-SHAPED COTYLEDON 3 (NAC031).